A 2483-amino-acid chain; its full sequence is Cation-independent mannose-6-phosphate receptor (2483 aa).

The signal sequence occupies residues 1–35; the sequence is MRAVQLGPVPSGPRVALLPPLLLLLLLAAAGSAQA. Residues 36-2295 lie on the Lumenal side of the membrane; it reads QAVDLDALCS…YKGLSERSQA (2260 aa). 9 MRH domains span residues 42-158, 167-315, 321-463, 468-613, 619-755, 758-917, 925-1072, 1075-1212, and 1218-1356; these read ALCS…ACKK, VPCY…ACHR, ESCS…ACIK, LLCG…ACVL, ENCT…ACPE, LECM…ACPI, QACS…ACTP, VDCQ…ACPV, and DNCQ…ACPP. Intrachain disulfides connect C44-C64 and C72-C79. N107 carries N-linked (GlcNAc...) asparagine glycosylation. Disulfide bonds link C112–C144, C129–C156, C169–C207, C223–C230, C270–C301, C283–C313, C323–C361, and C369–C377. N-linked (GlcNAc...) asparagine glycosylation is found at N395 and N430. Intrachain disulfides connect C415–C449, C429–C461, C470–C513, and C525–C532. 2 N-linked (GlcNAc...) asparagine glycosylation sites follow: N537 and N575. Disulfide bonds link C566–C599 and C580–C611. N-linked (GlcNAc...) asparagine glycosylation occurs at N620. Cystine bridges form between C621–C658, C666–C673, C724–C753, C760–C807, and C816–C823. N-linked (GlcNAc...) asparagine glycosylation is present at N740. Residue N864 is glycosylated (N-linked (GlcNAc...) asparagine). Disulfide bonds link C868–C903, C886–C915, C927–C964, C970–C981, C1035–C1070, C1077–C1118, and C1127–C1135. N-linked (GlcNAc...) asparagine glycosylation is present at N944. An N-linked (GlcNAc...) asparagine glycan is attached at N1157. 4 disulfides stabilise this stretch: C1170/C1198, C1183/C1210, C1220/C1255, and C1263/C1275. N1239 carries N-linked (GlcNAc...) asparagine glycosylation. N1305 carries N-linked (GlcNAc...) asparagine glycosylation. 2 cysteine pairs are disulfide-bonded: C1312–C1342 and C1326–C1354. An N-linked (GlcNAc...) asparagine glycan is attached at N1358. 6 consecutive MRH domains span residues 1360-1501, 1507-1641, 1643-1790, 1795-1982, 1985-2120, and 2128-2273; these read TECS…ACPV, DDCQ…ACEQ, TECT…VCPD, QGCA…VCPP, MECK…ACAV, and VNGT…VCPL. Disulfide bonds link C1362-C1401 and C1413-C1420. N-linked (GlcNAc...) asparagine glycosylation occurs at N1423. 20 cysteine pairs are disulfide-bonded: C1454–C1487, C1469–C1499, C1509–C1546, C1552–C1559, C1591–C1627, C1607–C1639, C1645–C1688, C1699–C1706, C1743–C1776, C1759–C1788, C1797–C1832, C1843–C1849, C1886–C1968, C1896–C1920, C1910–C1935, C1950–C1980, C1987–C2022, C2032–C2039, C2075–C2106, and C2089–C2118. The N-linked (GlcNAc...) asparagine glycan is linked to N1532. The N-linked (GlcNAc...) asparagine glycan is linked to N1649. N1750 carries N-linked (GlcNAc...) asparagine glycosylation. A glycan (N-linked (GlcNAc...) asparagine) is linked at N1809. One can recognise a Fibronectin type-II domain in the interval 1891–1937; that stretch reads DDGEPCVFPFIYKGKSYDECVLEGRAKLWCSKTANYDRDHEWGFCRQ. N-linked (GlcNAc...) asparagine glycosylation is present at N2078. N-linked (GlcNAc...) asparagine glycosylation occurs at N2129. 3 cysteine pairs are disulfide-bonded: C2181–C2187, C2225–C2259, and C2241–C2271. Residues 2296–2316 form a helical membrane-spanning segment; that stretch reads VGAVLSLLLVALTGCLLALLL. The Cytoplasmic segment spans residues 2317–2483; it reads HKKERRETVI…DDSDEDLLHI (167 aa). K2342 is modified (N6-acetyllysine). S2401 bears the Phosphoserine mark. The disordered stretch occupies residues 2415–2483; that stretch reads SGRGAEVESS…DDSDEDLLHI (69 aa). R2417 carries the omega-N-methylarginine modification. 2 stretches are compositionally biased toward basic and acidic residues: residues 2434–2451 and 2471–2483; these read VLKE…GEKA and SFHD…LLHI. 2 positions are modified to phosphoserine: S2471 and S2476.

The protein belongs to the MRL1/IGF2R family. As to quaternary structure, binds HA-I and HA-II plasma membrane adapters. Interacts with DPP4; the interaction is direct. Binds GGA1, GGA2 and GGA3. Interacts with the heterotrimeric retromer cargo-selective complex (CSC), formed by VPS26 (VPS26A or VPS26B), VPS29 and VPS35; which is involved in retrograde trafficking of the receptor from endosomes to the Golgi apparatus. Post-translationally, palmitoylated. Undergoes cysteine S-palmitoylation which promotes interaction with the retromer cargo-selective complex which mediates its retrograde trafficking to the Golgi apparatus.

It localises to the golgi apparatus membrane. Its subcellular location is the endosome membrane. Mediates the transport of phosphorylated lysosomal enzymes from the Golgi complex and the cell surface to lysosomes. Lysosomal enzymes bearing phosphomannosyl residues bind specifically to mannose-6-phosphate receptors in the Golgi apparatus and the resulting receptor-ligand complex is transported to an acidic prelysosomal compartment where the low pH mediates the dissociation of the complex. The receptor is then recycled back to the Golgi for another round of trafficking through its binding to the retromer. This receptor also binds IGF2. Acts as a positive regulator of T-cell coactivation by binding DPP4. The sequence is that of Cation-independent mannose-6-phosphate receptor (Igf2r) from Mus musculus (Mouse).